A 124-amino-acid chain; its full sequence is Urease subunit beta (124 aa).

Belongs to the urease beta subunit family. Heterotrimer of UreA (gamma), UreB (beta) and UreC (alpha) subunits. Three heterotrimers associate to form the active enzyme.

Its subcellular location is the cytoplasm. It catalyses the reaction urea + 2 H2O + H(+) = hydrogencarbonate + 2 NH4(+). It participates in nitrogen metabolism; urea degradation; CO(2) and NH(3) from urea (urease route): step 1/1. The polypeptide is Urease subunit beta (Ureaplasma urealyticum serovar 10 (strain ATCC 33699 / Western)).